The chain runs to 381 residues: Succinyl-diaminopimelate desuccinylase (381 aa).

Zn(2+) is bound at residue H68. D70 is an active-site residue. D101 is a binding site for Zn(2+). E135 (proton acceptor) is an active-site residue. E136, E164, and H350 together coordinate Zn(2+).

It belongs to the peptidase M20A family. DapE subfamily. As to quaternary structure, homodimer. The cofactor is Zn(2+). Co(2+) serves as cofactor.

The enzyme catalyses N-succinyl-(2S,6S)-2,6-diaminopimelate + H2O = (2S,6S)-2,6-diaminopimelate + succinate. It functions in the pathway amino-acid biosynthesis; L-lysine biosynthesis via DAP pathway; LL-2,6-diaminopimelate from (S)-tetrahydrodipicolinate (succinylase route): step 3/3. Its function is as follows. Catalyzes the hydrolysis of N-succinyl-L,L-diaminopimelic acid (SDAP), forming succinate and LL-2,6-diaminopimelate (DAP), an intermediate involved in the bacterial biosynthesis of lysine and meso-diaminopimelic acid, an essential component of bacterial cell walls. This chain is Succinyl-diaminopimelate desuccinylase, found in Neisseria meningitidis serogroup A / serotype 4A (strain DSM 15465 / Z2491).